Here is a 1577-residue protein sequence, read N- to C-terminus: Hemolysin (1577 aa).

Positions 1–29 are cleaved as a signal peptide; sequence MKSKNFKLSPSGRLAASLAIIFVSLNAYG. A compositionally biased stretch (basic and acidic residues) spans 437-446; it reads EKESRSENGN. 4 disordered regions span residues 437 to 467, 1081 to 1103, 1169 to 1188, and 1213 to 1232; these read EKESRSENGNKRNHTSRLESGSWSNSHQTET, TDTHSESQSNVNGSANLKVGTTP, QSASSEHTEKGNNLSGGVQA, and KQDEKSVSREGGTINNSGNL. Composition is skewed to polar residues over residues 454-467, 1081-1095, and 1169-1184; these read LESGSWSNSHQTET, TDTHSESQSNVNGSA, and QSASSEHTEKGNNLSG.

The protein resides in the cell outer membrane. In terms of biological role, bacterial hemolysins are exotoxins that attack blood cell membranes and cause cell rupture by mechanisms not clearly defined. Its function is as follows. Cell-bound hemolysin, which releases heme-iron from erythrocytes by interaction with the erythrocyte membrane. HpmA requires HpmB function. This Proteus mirabilis protein is Hemolysin (hpmA).